Here is a 1487-residue protein sequence, read N- to C-terminus: Chromosome partition protein MukB (1487 aa).

Position 34–41 (34–41 (GGNGAGKS)) interacts with ATP. Coiled coils occupy residues 297–426 (SSRE…LEKA), 460–666 (ALKH…RLAS), 781–806 (RAAR…AKAA), 836–1111 (EQAL…RTFV), and 1210–1266 (VEAI…LSNI). Positions 667–784 (PGGSNDPRLK…VIPLFGRAAR (118 aa)) are flexible hinge.

Belongs to the SMC family. MukB subfamily. In terms of assembly, homodimerization via its hinge domain. Binds to DNA via its C-terminal region. Interacts, and probably forms a ternary complex, with MukE and MukF via its C-terminal region. The complex formation is stimulated by calcium or magnesium. Interacts with tubulin-related protein FtsZ.

The protein localises to the cytoplasm. Its subcellular location is the nucleoid. Its function is as follows. Plays a central role in chromosome condensation, segregation and cell cycle progression. Functions as a homodimer, which is essential for chromosome partition. Involved in negative DNA supercoiling in vivo, and by this means organize and compact chromosomes. May achieve or facilitate chromosome segregation by condensation DNA from both sides of a centrally located replisome during cell division. In Vibrio vulnificus (strain CMCP6), this protein is Chromosome partition protein MukB.